Here is a 203-residue protein sequence, read N- to C-terminus: RNA annealing protein YRA2 (203 aa).

Met1 is subject to N-acetylmethionine. Disordered stretches follow at residues 1-60 (MDKA…REEP) and 137-203 (QPQR…YMKG). Residues 11–20 (NSHTDSSSNH) are compositionally biased toward polar residues. A compositionally biased stretch (basic and acidic residues) spans 47–60 (SRSKDRLYREREEP). Positions 64 to 138 (KRIRISKIPL…AKIEVEIYQP (75 aa)) constitute an RRM domain. Composition is skewed to basic residues over residues 139 to 153 (QRKHSRMNAHNRRKQ) and 163 to 180 (PGSHYRQRPNRVSKKNKG).

The protein belongs to the YRA1 family. In terms of assembly, associates with mRNPs. Interacts with YRA1.

The protein resides in the nucleus. In terms of biological role, involved in export of poly(A) mRNAs from the nucleus. Recruited to the coding sequences as well as poly-A sites of active genes. The protein is RNA annealing protein YRA2 (YRA2) of Saccharomyces cerevisiae (strain Lalvin EC1118 / Prise de mousse) (Baker's yeast).